A 149-amino-acid polypeptide reads, in one-letter code: Large ribosomal subunit protein bL9 (149 aa).

Belongs to the bacterial ribosomal protein bL9 family.

Functionally, binds to the 23S rRNA. This Salmonella agona (strain SL483) protein is Large ribosomal subunit protein bL9.